Consider the following 565-residue polypeptide: Deformed epidermal autoregulatory factor 1 homolog (565 aa).

2 disordered regions span residues G34–R62 and G162–T190. Pro residues predominate over residues P169–L181. Phosphothreonine is present on T171. S176 carries the phosphoserine modification. Residue T179 is modified to Phosphothreonine. Positions N193 to N273 constitute an SAND domain. The Nuclear localization signal signature appears at K301–K316. An interaction with LMO4 region spans residues I403 to K478. T432 is modified (phosphothreonine). Position 448 is a phosphoserine (S448). Residues C504, C507, C515, C518, C524, C528, H536, and C540 each contribute to the Zn(2+) site. Residues C504–C540 form an MYND-type zinc finger.

As to quaternary structure, homodimer. Isoform 1 and isoform 4 may form a heterodimer. Interacts with LMO2 and CLIM2. Interacts with LMO4; LMO4 blocks export from nucleus. May interact with the corepressors NCOR1 and NCRO2. Identified in a complex with the XRCC5 and XRCC6 heterodimer. Interacts (via the SAND domain) with the DNA-PK complex subunit XRCC6; the interaction is direct and may be inhibited by DNA-binding. In terms of processing, may be phosphorylated by DNA-PK complex in a DNA independent manner (in vitro). Expressed in various tissues and cells such as in peripheral mononuclear cells and hormone-secreting pituitary cells. Expression in pancreatic lymph nodes of patients with type 1 diabetes is 20 times higher than in healthy controls. Highly expressed in fetal and adult brain.

It is found in the nucleus. The protein resides in the cytoplasm. The protein localises to the secreted. Functionally, transcription factor that binds to sequence with multiple copies of 5'-TTC[CG]G-3' present in its own promoter and that of the HNRPA2B1 gene. Down-regulates transcription of these genes. Binds to the retinoic acid response element (RARE) 5'-AGGGTTCACCGAAAGTTCA-3'. Activates the proenkephalin gene independently of promoter binding, probably through protein-protein interaction. When secreted, behaves as an inhibitor of cell proliferation, by arresting cells in the G0 or G1 phase. Required for neural tube closure and skeletal patterning. Regulates epithelial cell proliferation and side-branching in the mammary gland. Controls the expression of peripheral tissue antigens in pancreatic lymph nodes. Isoform 1 displays greater transcriptional activity than isoform 4. Isoform 4 may inhibit transcriptional activity of isoform 1 by interacting with isoform 1 and retaining it in the cytoplasm. Transcriptional activator of EIF4G3. This chain is Deformed epidermal autoregulatory factor 1 homolog (DEAF1), found in Homo sapiens (Human).